We begin with the raw amino-acid sequence, 122 residues long: Large ribosomal subunit protein uL14 (122 aa).

It belongs to the universal ribosomal protein uL14 family. In terms of assembly, part of the 50S ribosomal subunit. Forms a cluster with proteins L3 and L19. In the 70S ribosome, L14 and L19 interact and together make contacts with the 16S rRNA in bridges B5 and B8.

Its function is as follows. Binds to 23S rRNA. Forms part of two intersubunit bridges in the 70S ribosome. The chain is Large ribosomal subunit protein uL14 from Lacticaseibacillus casei (strain BL23) (Lactobacillus casei).